Consider the following 208-residue polypeptide: ATP-dependent Clp protease proteolytic subunit (208 aa).

Ser106 acts as the Nucleophile in catalysis. His131 is a catalytic residue.

Belongs to the peptidase S14 family. As to quaternary structure, fourteen ClpP subunits assemble into 2 heptameric rings which stack back to back to give a disk-like structure with a central cavity, resembling the structure of eukaryotic proteasomes.

The protein resides in the cytoplasm. The catalysed reaction is Hydrolysis of proteins to small peptides in the presence of ATP and magnesium. alpha-casein is the usual test substrate. In the absence of ATP, only oligopeptides shorter than five residues are hydrolyzed (such as succinyl-Leu-Tyr-|-NHMec, and Leu-Tyr-Leu-|-Tyr-Trp, in which cleavage of the -Tyr-|-Leu- and -Tyr-|-Trp bonds also occurs).. In terms of biological role, cleaves peptides in various proteins in a process that requires ATP hydrolysis. Has a chymotrypsin-like activity. Plays a major role in the degradation of misfolded proteins. This chain is ATP-dependent Clp protease proteolytic subunit, found in Caulobacter sp. (strain K31).